A 464-amino-acid chain; its full sequence is tRNA-2-methylthio-N(6)-dimethylallyladenosine synthase (464 aa).

The MTTase N-terminal domain maps to 19-135; sequence GSYWITTFGC…LENLLGKVDL (117 aa). Cysteine 28, cysteine 64, cysteine 98, cysteine 170, cysteine 174, and cysteine 177 together coordinate [4Fe-4S] cluster. In terms of domain architecture, Radical SAM core spans 156–393; the sequence is RESSICGWVN…NELVETTSKQ (238 aa). A TRAM domain is found at 396-464; that stretch reads ERYLDSIESV…PFSLTGILCL (69 aa).

It belongs to the methylthiotransferase family. MiaB subfamily. Monomer. The cofactor is [4Fe-4S] cluster.

It localises to the cytoplasm. It catalyses the reaction N(6)-dimethylallyladenosine(37) in tRNA + (sulfur carrier)-SH + AH2 + 2 S-adenosyl-L-methionine = 2-methylsulfanyl-N(6)-dimethylallyladenosine(37) in tRNA + (sulfur carrier)-H + 5'-deoxyadenosine + L-methionine + A + S-adenosyl-L-homocysteine + 2 H(+). In terms of biological role, catalyzes the methylthiolation of N6-(dimethylallyl)adenosine (i(6)A), leading to the formation of 2-methylthio-N6-(dimethylallyl)adenosine (ms(2)i(6)A) at position 37 in tRNAs that read codons beginning with uridine. The sequence is that of tRNA-2-methylthio-N(6)-dimethylallyladenosine synthase from Prochlorococcus marinus (strain MIT 9215).